The following is a 147-amino-acid chain: Small ribosomal subunit protein uS12 (147 aa).

This sequence belongs to the universal ribosomal protein uS12 family. Part of the 30S ribosomal subunit.

With S4 and S5 plays an important role in translational accuracy. Located at the interface of the 30S and 50S subunits. The sequence is that of Small ribosomal subunit protein uS12 from Methanococcus aeolicus (strain ATCC BAA-1280 / DSM 17508 / OCM 812 / Nankai-3).